The chain runs to 217 residues: Homologous-pairing protein 2 homolog (217 aa).

Positions isoleucine 93–histidine 153 form a coiled coil. Positions serine 118–glutamate 182 are DNA-binding.

It belongs to the HOP2 family. Interacts with the DNA-binding domain of the nuclear receptors NR3C1/GR, ESR2/ER-beta, THRB and RXRA. Forms a stable heterodimer with MND1. Interacts with PSMC3/TBP1. Post-translationally, PTM: Phosphorylated by PKA, PKC and MAPK. Highly expressed in testis and colon.

The protein resides in the nucleus. In terms of biological role, plays an important role in meiotic recombination. Stimulates DMC1-mediated strand exchange required for pairing homologous chromosomes during meiosis. The complex PSMC3IP/MND1 binds DNA, stimulates the recombinase activity of DMC1 as well as DMC1 D-loop formation from double-strand DNA. This complex stabilizes presynaptic RAD51 and DMC1 filaments formed on single strand DNA to capture double-strand DNA. This complex stimulates both synaptic and presynaptic critical steps in RAD51 and DMC1-promoted homologous pairing. May inhibit HIV-1 viral protein TAT activity and modulate the activity of proteasomes through association with PSMC3. Acts as a tissue specific coactivator of hormone-dependent transcription mediated by nuclear receptors. This Homo sapiens (Human) protein is Homologous-pairing protein 2 homolog (PSMC3IP).